The following is a 230-amino-acid chain: 5'-methylthioadenosine/S-adenosylhomocysteine nucleosidase (230 aa).

The active-site Proton acceptor is Glu-12. Substrate-binding positions include Gly-78, Ile-153, and 174–175; that span reads ME. Asp-198 (proton donor) is an active-site residue.

Belongs to the PNP/UDP phosphorylase family. MtnN subfamily.

The catalysed reaction is S-adenosyl-L-homocysteine + H2O = S-(5-deoxy-D-ribos-5-yl)-L-homocysteine + adenine. It carries out the reaction S-methyl-5'-thioadenosine + H2O = 5-(methylsulfanyl)-D-ribose + adenine. The enzyme catalyses 5'-deoxyadenosine + H2O = 5-deoxy-D-ribose + adenine. The protein operates within amino-acid biosynthesis; L-methionine biosynthesis via salvage pathway; S-methyl-5-thio-alpha-D-ribose 1-phosphate from S-methyl-5'-thioadenosine (hydrolase route): step 1/2. Its function is as follows. Catalyzes the irreversible cleavage of the glycosidic bond in both 5'-methylthioadenosine (MTA) and S-adenosylhomocysteine (SAH/AdoHcy) to adenine and the corresponding thioribose, 5'-methylthioribose and S-ribosylhomocysteine, respectively. Also cleaves 5'-deoxyadenosine, a toxic by-product of radical S-adenosylmethionine (SAM) enzymes, into 5-deoxyribose and adenine. The sequence is that of 5'-methylthioadenosine/S-adenosylhomocysteine nucleosidase from Shewanella halifaxensis (strain HAW-EB4).